Consider the following 274-residue polypeptide: Aliphatic sulfonates import ATP-binding protein SsuB 2 (274 aa).

Residues 21-242 (LALRGVARRF…SRGSARLAAL (222 aa)) form the ABC transporter domain. An ATP-binding site is contributed by 53 to 60 (GRSGCGKS).

This sequence belongs to the ABC transporter superfamily. Aliphatic sulfonates importer (TC 3.A.1.17.2) family. As to quaternary structure, the complex is composed of two ATP-binding proteins (SsuB), two transmembrane proteins (SsuC) and a solute-binding protein (SsuA).

The protein resides in the cell inner membrane. The catalysed reaction is ATP + H2O + aliphatic sulfonate-[sulfonate-binding protein]Side 1 = ADP + phosphate + aliphatic sulfonateSide 2 + [sulfonate-binding protein]Side 1.. Part of the ABC transporter complex SsuABC involved in aliphatic sulfonates import. Responsible for energy coupling to the transport system. The polypeptide is Aliphatic sulfonates import ATP-binding protein SsuB 2 (Pseudomonas aeruginosa (strain UCBPP-PA14)).